The following is a 966-amino-acid chain: uncharacterized protein (966 aa).

The N-terminal stretch at 1 to 24 is a signal peptide; sequence MQGNLLKVLGVLAIVATLVCFIFA. 6 helical membrane passes run 601–621, 711–731, 743–763, 785–805, 822–842, and 855–875; these read IKAI…LGFA, LGLS…IVII, AFMA…FLLF, VVMM…LDFV, FIGT…INWF, and GVNM…YGYV. Positions 918-966 are disordered; it reads TRQGITGRAEARLKQRNKTLDQAEKNRKNTQKEGGEKTNEEPPKPETPK. Residues 926 to 966 are compositionally biased toward basic and acidic residues; the sequence is AEARLKQRNKTLDQAEKNRKNTQKEGGEKTNEEPPKPETPK.

It belongs to the TrbL/VirB6 family.

Its subcellular location is the cell membrane. This is an uncharacterized protein from Rickettsia conorii (strain ATCC VR-613 / Malish 7).